The chain runs to 231 residues: uncharacterized protein (231 aa).

Positions 3–119 (RADFCIIGLG…RTMGIREALI (117 aa)) constitute an RCK N-terminal domain. The RCK C-terminal domain occupies 134 to 221 (HGMETEIINL…VNQYLRYINP (88 aa)).

This is an uncharacterized protein from Mycoplasma pneumoniae (strain ATCC 29342 / M129 / Subtype 1) (Mycoplasmoides pneumoniae).